Consider the following 121-residue polypeptide: Large ribosomal subunit protein bL12 (121 aa).

Belongs to the bacterial ribosomal protein bL12 family. In terms of assembly, homodimer. Part of the ribosomal stalk of the 50S ribosomal subunit. Forms a multimeric L10(L12)X complex, where L10 forms an elongated spine to which 2 to 4 L12 dimers bind in a sequential fashion. Binds GTP-bound translation factors.

Functionally, forms part of the ribosomal stalk which helps the ribosome interact with GTP-bound translation factors. Is thus essential for accurate translation. This Shewanella piezotolerans (strain WP3 / JCM 13877) protein is Large ribosomal subunit protein bL12.